The sequence spans 199 residues: FMN-dependent NADH:quinone oxidoreductase (199 aa).

Residues Ser-10, 16 to 18 (SVS), and 96 to 99 (MYNF) contribute to the FMN site.

The protein belongs to the azoreductase type 1 family. In terms of assembly, homodimer. FMN serves as cofactor.

The catalysed reaction is 2 a quinone + NADH + H(+) = 2 a 1,4-benzosemiquinone + NAD(+). The enzyme catalyses N,N-dimethyl-1,4-phenylenediamine + anthranilate + 2 NAD(+) = 2-(4-dimethylaminophenyl)diazenylbenzoate + 2 NADH + 2 H(+). In terms of biological role, quinone reductase that provides resistance to thiol-specific stress caused by electrophilic quinones. Also exhibits azoreductase activity. Catalyzes the reductive cleavage of the azo bond in aromatic azo compounds to the corresponding amines. The chain is FMN-dependent NADH:quinone oxidoreductase from Azotobacter vinelandii (strain DJ / ATCC BAA-1303).